The sequence spans 1115 residues: Integrin alpha-PS3 (1115 aa).

A signal peptide spans 1–24 (MNAESTMFPHIFLALLALISHIEA). At 25–1054 (FNFMPRPSRV…PNIISKHQET (1030 aa)) the chain is on the extracellular side. FG-GAP repeat units follow at residues 39–99 (KHLK…VCSP), 113–174 (SEYT…STPQ), 193–246 (DNGN…VDNP), 278–335 (IPTP…GKSI), 336–397 (HKYH…FNFE), 398–453 (RQIL…GLRD), and 460–522 (DAPS…SESR). Residues asparagine 46, asparagine 82, and asparagine 166 are each glycosylated (N-linked (GlcNAc...) asparagine). Asparagine 438 carries N-linked (GlcNAc...) asparagine glycosylation. 4 N-linked (GlcNAc...) asparagine glycosylation sites follow: asparagine 696, asparagine 845, asparagine 868, and asparagine 964. Residues 1055–1075 (GLPIWIIIVSVIGGLLLLSAI) form a helical membrane-spanning segment. At 1076–1115 (SYLLYKFGFFNRTKKDELDRLVQQNPVEPEAENLNSGGNN) the chain is on the cytoplasmic side.

Belongs to the integrin alpha chain family. In terms of assembly, heterodimer of an alpha and a beta subunit. The alpha subunit is composed of a heavy and a light chain linked by a disulfide bond. Interacts with mys/beta-PS and Itgbn. Expressed in embryonic and larval hemocytes (at protein level). Expressed in tissues undergoing invagination, tissue movement and morphogenesis such as salivary gland, trachea, midgut endoderm, dorsal vessel, midline of the ventral nerve cord, amnioserosa and the amnioproctodeal invagination. Expressed in the mushroom body neuropil, brain areas that contain mushroom body processes in synaptic contact with other neurons. In egg chambers, expressed in border cells, in stretch cells and in dorsal appendage primordia.

It localises to the apical cell membrane. Its subcellular location is the lateral cell membrane. The protein localises to the cytoplasm. Functionally, integrin alpha-PS3/beta-PS is a receptor for laminin. Also binds to wb. Important during embryogenesis for the development of the trachea, dorsal vessel and salivary gland, as well as for dorsal closure. Required for short-term memory processes. Minor involvement in the establishment of the oocyte anterior-posterior length. Plays a role in timely border cell migration during oogenesis, probably mediated by JNK signaling. Integrin alpha-PS3/Itgbn is required for effective phagocytosis of apoptotic cells during embryonic development and for the phagocytic elimination of S.aureus by mediating the binding of S.aureus peptidoglycan to larval hemocytes, which probably activates a signaling pathway involving Rac1 and Rac2. Integrin alpha-PS3/Itgbn also regulates Fak activity during neuromuscular junction (NMJ) growth and is required for its activation in presynapsis of NMJs. Seems to be dispensable for major morphogenetic processes. This chain is Integrin alpha-PS3 (scb), found in Drosophila melanogaster (Fruit fly).